Consider the following 132-residue polypeptide: Probable histone H2A.1 (132 aa).

Residues 1–22 (MAGRGKTLGSGSAKKATTRSSK) are disordered.

It belongs to the histone H2A family. As to quaternary structure, the nucleosome is a histone octamer containing two molecules each of H2A, H2B, H3 and H4 assembled in one H3-H4 heterotetramer and two H2A-H2B heterodimers. The octamer wraps approximately 147 bp of DNA. Not ubiquitinated. In terms of tissue distribution, low level of expression; mainly in roots. Found in the root cap cells and in non dividing tissues of the plant, including the root elongation and maturation zones and the leaf veins.

The protein localises to the nucleus. Its subcellular location is the chromosome. In terms of biological role, core component of nucleosome. Nucleosomes wrap and compact DNA into chromatin, limiting DNA accessibility to the cellular machineries which require DNA as a template. Histones thereby play a central role in transcription regulation, DNA repair, DNA replication and chromosomal stability. DNA accessibility is regulated via a complex set of post-translational modifications of histones, also called histone code, and nucleosome remodeling. This chain is Probable histone H2A.1, found in Arabidopsis thaliana (Mouse-ear cress).